The following is a 257-amino-acid chain: MTEDQAPILDFWGPLRKTTQSRIGLGRAGDSLPTKRVLEFKAAHAAARDAVHEPLDSETLASRVDGVGIGAPVVVASSVSTRSEYLRRPDLGRQPADLSAIKSSDKEIGFILADGLSPRALMDHGEQLLSALVTALGERYSIAPPVIATNARVALGDHIAAAMGVQTAIVLIGERPGLSVADSVGIYLTHLPRVGRTDADRNCISNVHPPEGLGYEQAARVVLGLVTGARQLGRSGVDLKDTSRADAVASGEVLTLD.

3 residues coordinate adenosylcob(III)alamin: valine 153, glutamate 174, and cysteine 203.

It belongs to the EutC family. The basic unit is a heterodimer which dimerizes to form tetramers. The heterotetramers trimerize; 6 large subunits form a core ring with 6 small subunits projecting outwards. The cofactor is adenosylcob(III)alamin.

The protein localises to the bacterial microcompartment. It catalyses the reaction ethanolamine = acetaldehyde + NH4(+). The protein operates within amine and polyamine degradation; ethanolamine degradation. Its function is as follows. Catalyzes the deamination of various vicinal amino-alcohols to oxo compounds. Allows this organism to utilize ethanolamine as the sole source of nitrogen and carbon in the presence of external vitamin B12. The protein is Ethanolamine ammonia-lyase small subunit of Rhodococcus erythropolis (Arthrobacter picolinophilus).